Here is a 79-residue protein sequence, read N- to C-terminus: Suppressor of tumorigenicity 20 protein (79 aa).

Expressed in leukocytes, lung, spleen, liver, heart, kidney, muscle and uterine cervix. Down-regulated in cervical cancer.

May act as a tumor suppressor. Promotes apoptosis of cancer cells. The chain is Suppressor of tumorigenicity 20 protein (ST20) from Homo sapiens (Human).